The sequence spans 479 residues: MAQHTVYFPDAFLTQMREAMPSTPSFDDFLAACQRPLRRSIRVNTLKISVADFLRLTAPYGWTLTPIPWCEEGFWIERDNEDALPLGSTAEHLSGLFYIQEASSMLPVAALFADGNAPQRVMDIAAAPGSKTTQIAARMNNEGTILANEFSASRVKVLHANISRCGISNVALTHFDGRVFGAAVPEMFDAILLDAPCSGEGVVRKDPDALKNWSPESNQEIAATQRELIDSAFHALRLGGTLVYSTCTLNREENEAVCLWLKETYPDAVEFLPLGDLFPGTNKALTEEGFLHVFPQIYDCEGFFVARLRKTQAIPALPTPKYKVGNFPFSPVKDREAGQIRQAAASVGLNWDENLRPWQRDKELWLFPVGIEALIGKVRFSRLGIKLAETHNKGYRWQHEAVIALASPDNENAFELTPQEAEEWYRGRDVYPQAAPVADDVLVTFQHQPIGLAKRIGSRLKNSYPRELVRDGKLFTSNA.

S-adenosyl-L-methionine contacts are provided by residues 125 to 131 (AAAPGSK), Glu-149, Asp-176, and Asp-194. Cys-247 acts as the Nucleophile in catalysis.

This sequence belongs to the class I-like SAM-binding methyltransferase superfamily. RsmB/NOP family.

It localises to the cytoplasm. The enzyme catalyses cytidine(1407) in 16S rRNA + S-adenosyl-L-methionine = 5-methylcytidine(1407) in 16S rRNA + S-adenosyl-L-homocysteine + H(+). Specifically methylates the cytosine at position 1407 (m5C1407) of 16S rRNA. The chain is Ribosomal RNA small subunit methyltransferase F from Shigella dysenteriae serotype 1 (strain Sd197).